Here is a 387-residue protein sequence, read N- to C-terminus: Galanin receptor type 2 (387 aa).

Residues 1 to 28 (MNVSGCPGAGNASQAGGGGGWHPEAVIV) are Extracellular-facing. Asn2 and Asn11 each carry an N-linked (GlcNAc...) asparagine glycan. The helical transmembrane segment at 29 to 49 (PLLFALIFLVGTVGNTLVLAV) threads the bilayer. The Cytoplasmic segment spans residues 50-60 (LLRGGQAVSTT). A helical membrane pass occupies residues 61-81 (NLFILNLGVADLCFILCCVPF). Over 82–99 (QATIYTLDGWVFGSLLCK) the chain is Extracellular. A disulfide bond links Cys98 and Cys175. Residues 100 to 121 (AVHFLIFLTMHASSFTLAAVSL) form a helical membrane-spanning segment. The Cytoplasmic segment spans residues 122-141 (DRYLAIRYPLHSRELRTPRN). A helical membrane pass occupies residues 142 to 162 (ALAAIGLIWGLSLLFSGPYLS). Topologically, residues 163 to 187 (YYRQSQLANLTVCHPAWSAPRRRAM) are extracellular. Residues 188–208 (DICTFVFSYLLPVLVLGLTYA) traverse the membrane as a helical segment. The Cytoplasmic segment spans residues 209-237 (RTLRYLWRAVDPVAAGSGARRAKRKVTRM). A helical membrane pass occupies residues 238-258 (ILIVAALFCLCWMPHHALILC). At 259–260 (VW) the chain is on the extracellular side. The helical transmembrane segment at 261–281 (FGQFPLTRATYALRILSHLVS) threads the bilayer. The Cytoplasmic portion of the chain corresponds to 282–387 (YANSCVNPIV…GDSILTVDVA (106 aa)).

It belongs to the G-protein coupled receptor 1 family. In terms of tissue distribution, expressed abundantly within the central nervous system in both hypothalamus and hippocampus. In peripheral tissues, the strongest expression was observed in heart, kidney, liver, and small intestine.

It is found in the cell membrane. Its function is as follows. Receptor for the hormone galanin and GALP. Receptor for the hormone spexin-1. The activity of this receptor is mediated by G proteins that activate the phospholipase C/protein kinase C pathway (via G(q)) and that inhibit adenylyl cyclase (via G(i)). In Homo sapiens (Human), this protein is Galanin receptor type 2 (GALR2).